A 720-amino-acid polypeptide reads, in one-letter code: MELGCWTQLGLTFLQLLLISSLPREYTVINEACPGAEWNIMCRECCEYDQIECVCPGKREVVGYTIPCCRNEENECDSCLIHPGCTIFENCKSCRNGSWGGTLDDFYVKGFYCAECRAGWYGGDCMRCGQVLRAPKGQILLESYPLNAHCEWTIHAKPGFVIQLRFVMLSLEFDYMCQYDYVEVRDGDNRDGQIIKRVCGNERPAPIQSIGSSLHVLFHSDGSKNFDGFHAIYEEITACSSSPCFHDGTCVLDKAGSYKCACLAGYTGQRCENLLEERNCSDPGGPVNGYQKITGGPGLINGRHAKIGTVVSFFCNNSYVLSGNEKRTCQQNGEWSGKQPICIKACREPKISDLVRRRVLPMQVQSRETPLHQLYSAAFSKQKLQSAPTKKPALPFGDLPMGYQHLHTQLQYECISPFYRRLGSSRRTCLRTGKWSGRAPSCIPICGKIENITAPKTQGLRWPWQAAIYRRTSGVHDGSLHKGAWFLVCSGALVNERTVVVAAHCVTDLGKVTMIKTADLKVVLGKFYRDDDRDEKTIQSLQISAIILHPNYDPILLDADIAILKLLDKARISTRVQPICLAASRDLSTSFQESHITVAGWNVLADVRSPGFKNDTLRSGVVSVVDSLLCEEQHEDHGIPVSVTDNMFCASWEPTAPSDICTAETGGIAAVSFPGRASPEPRWHLMGLVSWSYDKTCSHRLSTAFTKVLPFKDWIERNMK.

The first 21 residues, Met1 to Ser21, serve as a signal peptide directing secretion. 9 disulfide bridges follow: Cys128-Cys150, Cys177-Cys199, Cys239-Cys250, Cys244-Cys260, Cys262-Cys271, Cys280-Cys329, Cys315-Cys342, Cys414-Cys442, and Cys489-Cys505. One can recognise a CUB domain in the interval Cys128–Ile236. An EGF-like domain is found at Glu235–Glu272. 2 Sushi domains span residues Arg278 to Lys344 and Ala387 to Pro444. Positions Ile445–Lys720 constitute a Peptidase S1 domain. Asn614 carries N-linked (GlcNAc...) asparagine glycosylation. 2 cysteine pairs are disulfide-bonded: Cys630-Cys649 and Cys661-Cys697.

The protein belongs to the peptidase S1 family.

The protein localises to the secreted. May play a role in regeneration of skeletal muscle. This chain is Inactive serine protease PAMR1 (PAMR1), found in Homo sapiens (Human).